The following is a 325-amino-acid chain: Cytochrome c biogenesis protein CcsA (325 aa).

Helical transmembrane passes span 14 to 34 (TFAI…FPNL), 36 to 56 (GLPA…AALL), 68 to 88 (ISNL…IHLL), 97 to 117 (LVGA…AFTL), 142 to 162 (VMMV…AFLV), 233 to 253 (VIGL…VWAN), 260 to 280 (WSWD…AAYL), and 294 to 314 (AILA…VNLL).

The protein belongs to the CcmF/CycK/Ccl1/NrfE/CcsA family. May interact with ccs1.

The protein resides in the cellular thylakoid membrane. Its function is as follows. Required during biogenesis of c-type cytochromes (cytochrome c6 and cytochrome f) at the step of heme attachment. This is Cytochrome c biogenesis protein CcsA from Synechococcus sp. (strain ATCC 27144 / PCC 6301 / SAUG 1402/1) (Anacystis nidulans).